The following is a 300-amino-acid chain: Soluble inorganic pyrophosphatase 6, chloroplastic (300 aa).

The N-terminal 66 residues, 1–66 (MAATRVLTAA…CSAIYNPQVK (66 aa)), are a transit peptide targeting the chloroplast. Arg140 lines the diphosphate pocket. Tyr142 functions as the Proton donor in the catalytic mechanism. Mg(2+) contacts are provided by Asp173, Asp178, and Asp210.

Belongs to the PPase family. It depends on Mg(2+) as a cofactor. As to expression, expressed in all tissues tested. Highest expression in flowers, leaves and roots. Lower levels of expression in siliques, stems, ovary, stigma and pollen.

The protein localises to the plastid. It localises to the chloroplast stroma. The catalysed reaction is diphosphate + H2O = 2 phosphate + H(+). Its activity is regulated as follows. Inhibited by NaF. This chain is Soluble inorganic pyrophosphatase 6, chloroplastic, found in Arabidopsis thaliana (Mouse-ear cress).